The chain runs to 401 residues: CCA-adding enzyme (401 aa).

Gly32 and Arg35 together coordinate ATP. Residues Gly32 and Arg35 each contribute to the CTP site. 2 residues coordinate Mg(2+): Asp45 and Asp47. The ATP site is built by Arg116, Asp159, Arg162, Arg165, and Arg168. CTP-binding residues include Arg116, Asp159, Arg162, Arg165, and Arg168.

It belongs to the tRNA nucleotidyltransferase/poly(A) polymerase family. Bacterial CCA-adding enzyme type 3 subfamily. Homodimer. It depends on Mg(2+) as a cofactor.

The catalysed reaction is a tRNA precursor + 2 CTP + ATP = a tRNA with a 3' CCA end + 3 diphosphate. It catalyses the reaction a tRNA with a 3' CCA end + 2 CTP + ATP = a tRNA with a 3' CCACCA end + 3 diphosphate. Catalyzes the addition and repair of the essential 3'-terminal CCA sequence in tRNAs without using a nucleic acid template. Adds these three nucleotides in the order of C, C, and A to the tRNA nucleotide-73, using CTP and ATP as substrates and producing inorganic pyrophosphate. tRNA 3'-terminal CCA addition is required both for tRNA processing and repair. Also involved in tRNA surveillance by mediating tandem CCA addition to generate a CCACCA at the 3' terminus of unstable tRNAs. While stable tRNAs receive only 3'-terminal CCA, unstable tRNAs are marked with CCACCA and rapidly degraded. This is CCA-adding enzyme from Leuconostoc mesenteroides subsp. mesenteroides (strain ATCC 8293 / DSM 20343 / BCRC 11652 / CCM 1803 / JCM 6124 / NCDO 523 / NBRC 100496 / NCIMB 8023 / NCTC 12954 / NRRL B-1118 / 37Y).